We begin with the raw amino-acid sequence, 181 residues long: Cyclic AMP-dependent transcription factor ATF-3 (181 aa).

The interval 76-96 (VTKSEVAPEEDERKRRRRERN) is disordered. Residue Lys-78 forms a Glycyl lysine isopeptide (Lys-Gly) (interchain with G-Cter in SUMO2) linkage. The region spanning 86–149 (DERKRRRRER…QHLIYMLNLH (64 aa)) is the bZIP domain. Positions 88-110 (RKRRRRERNKIAAAKCRNKKKEK) are basic motif. The segment at 114–142 (LQKESEKLESVNAELKAQIEELKNEKQHL) is leucine-zipper. Thr-162 is modified (phosphothreonine). A Glycyl lysine isopeptide (Lys-Gly) (interchain with G-Cter in SUMO2) cross-link involves residue Lys-175.

Belongs to the bZIP family. ATF subfamily. As to quaternary structure, ATF3 alone can bind DNA, but it preferentially forms heteromeric complexes with JUN and JUNB and does not interact with FOS. In terms of tissue distribution, expressed in tissues containing skeletal muscle or smooth muscle. Expressed in cutaneous and muscular sensory neurons.

The protein resides in the nucleus. This protein binds the cAMP response element (CRE) (consensus: 5'-GTGACGT[AC][AG]-3'), a sequence present in many viral and cellular promoters. Represses transcription from promoters with ATF sites. It may repress transcription by stabilizing the binding of inhibitory cofactors at the promoter. In Rattus norvegicus (Rat), this protein is Cyclic AMP-dependent transcription factor ATF-3 (Atf3).